A 253-amino-acid polypeptide reads, in one-letter code: MEQIMASTVLPMRFSMLLRTIDPIKFLWSGALFLGVLSIFILITKLPVHILRIFYPPVSVFVHVGLFIVYIVSASYQAGSDKSDPKHLQSGPPWYITKSCSVASNKDNIGYCQQAKALFGFTIIIIVLYFVEIIVSVHSCFVTKEEKAERDELREEKRTMKEYEDMVLRTPRTFPMMSPALPSGGTTQMMPTMSSRSPEFSTFGHGSSDLPLRDHFSTPNPRPPAQQESSETLAPGNQPQMYFPPPPKKAAKV.

The next 3 membrane-spanning stretches (helical) occupy residues 23–43 (PIKF…FILI), 53–73 (IFYP…YIVS), and 117–137 (ALFG…IVSV). The interval 174–253 (FPMMSPALPS…PPPPKKAAKV (80 aa)) is disordered. Polar residues-rich tracts occupy residues 184 to 200 (GGTT…SPEF) and 226 to 240 (QQES…NQPQ). The span at 242–253 (YFPPPPKKAAKV) shows a compositional bias: pro residues.

It localises to the membrane. Its function is as follows. Involved in mycelium growth and repression of conidia formation by affecting the expression of brlA and abaA. Acts as a negative regulation factor for kojic acid production through affecting the expression of kojA, kojR and kojT. The chain is Kojic acid related protein 1 from Aspergillus oryzae (strain ATCC 42149 / RIB 40) (Yellow koji mold).